Reading from the N-terminus, the 109-residue chain is Phosphoribosyl-ATP pyrophosphatase (109 aa).

This sequence belongs to the PRA-PH family.

The protein resides in the cytoplasm. It catalyses the reaction 1-(5-phospho-beta-D-ribosyl)-ATP + H2O = 1-(5-phospho-beta-D-ribosyl)-5'-AMP + diphosphate + H(+). The protein operates within amino-acid biosynthesis; L-histidine biosynthesis; L-histidine from 5-phospho-alpha-D-ribose 1-diphosphate: step 2/9. This chain is Phosphoribosyl-ATP pyrophosphatase, found in Marinobacter nauticus (strain ATCC 700491 / DSM 11845 / VT8) (Marinobacter aquaeolei).